The following is a 246-amino-acid chain: Adenosylcobinamide-GDP ribazoletransferase (246 aa).

6 helical membrane passes run Ile-34–Leu-54, Cys-59–Phe-79, Gly-113–Leu-133, Pro-138–Tyr-158, Leu-171–Leu-191, and Val-194–Leu-214.

This sequence belongs to the CobS family. Mg(2+) is required as a cofactor.

The protein localises to the cell inner membrane. The enzyme catalyses alpha-ribazole + adenosylcob(III)inamide-GDP = adenosylcob(III)alamin + GMP + H(+). The catalysed reaction is alpha-ribazole 5'-phosphate + adenosylcob(III)inamide-GDP = adenosylcob(III)alamin 5'-phosphate + GMP + H(+). It functions in the pathway cofactor biosynthesis; adenosylcobalamin biosynthesis; adenosylcobalamin from cob(II)yrinate a,c-diamide: step 7/7. Functionally, joins adenosylcobinamide-GDP and alpha-ribazole to generate adenosylcobalamin (Ado-cobalamin). Also synthesizes adenosylcobalamin 5'-phosphate from adenosylcobinamide-GDP and alpha-ribazole 5'-phosphate. This is Adenosylcobinamide-GDP ribazoletransferase from Klebsiella pneumoniae (strain 342).